We begin with the raw amino-acid sequence, 420 residues long: UDP-N-acetylglucosamine 1-carboxyvinyltransferase (420 aa).

22–23 (KN) is a phosphoenolpyruvate binding site. Residue R93 participates in UDP-N-acetyl-alpha-D-glucosamine binding. C117 acts as the Proton donor in catalysis. C117 bears the 2-(S-cysteinyl)pyruvic acid O-phosphothioketal mark. Positions 307 and 329 each coordinate UDP-N-acetyl-alpha-D-glucosamine.

It belongs to the EPSP synthase family. MurA subfamily.

The protein localises to the cytoplasm. It carries out the reaction phosphoenolpyruvate + UDP-N-acetyl-alpha-D-glucosamine = UDP-N-acetyl-3-O-(1-carboxyvinyl)-alpha-D-glucosamine + phosphate. The protein operates within cell wall biogenesis; peptidoglycan biosynthesis. Cell wall formation. Adds enolpyruvyl to UDP-N-acetylglucosamine. The sequence is that of UDP-N-acetylglucosamine 1-carboxyvinyltransferase from Alcanivorax borkumensis (strain ATCC 700651 / DSM 11573 / NCIMB 13689 / SK2).